Consider the following 532-residue polypeptide: Phosphoribosylamine--glycine ligase, chloroplastic (532 aa).

The N-terminal 75 residues, 1 to 75, are a transit peptide targeting the chloroplast; that stretch reads MSSLCASNCY…IQRRLFLLRC (75 aa). The 209-residue stretch at 204–412 folds into the ATP-grasp domain; it reads KNLCHKYNIP…LAKVLLAACK (209 aa).

Belongs to the GARS family.

The protein resides in the plastid. It localises to the chloroplast. It catalyses the reaction 5-phospho-beta-D-ribosylamine + glycine + ATP = N(1)-(5-phospho-beta-D-ribosyl)glycinamide + ADP + phosphate + H(+). It participates in purine metabolism; IMP biosynthesis via de novo pathway; N(1)-(5-phospho-D-ribosyl)glycinamide from 5-phospho-alpha-D-ribose 1-diphosphate: step 2/2. This is Phosphoribosylamine--glycine ligase, chloroplastic (PUR2) from Arabidopsis thaliana (Mouse-ear cress).